A 581-amino-acid polypeptide reads, in one-letter code: Adenine deaminase (581 aa).

The protein belongs to the metallo-dependent hydrolases superfamily. Adenine deaminase family. It depends on Mn(2+) as a cofactor.

The catalysed reaction is adenine + H2O + H(+) = hypoxanthine + NH4(+). The protein is Adenine deaminase of Lysinibacillus sphaericus (strain C3-41).